The primary structure comprises 500 residues: NAD(P)H-quinone oxidoreductase chain 4, chloroplastic (500 aa).

The next 14 membrane-spanning stretches (helical) occupy residues 4–24 (FPWLTIIVVLPISAGSSIGFL), 37–57 (ICICILELLLTTYAFCYHFQL), 87–107 (MGPVLLTGFITTLATLAAWPV), 113–130 (LFHFLMLAMYSGQIGSFS), 134–154 (LLLFFMMWELELIPIYLLLSL), 167–187 (FILYTAGGSIFLLMGVSGMGL), 208–228 (ALEIIFYIGFFIAYAAKSPII), 242–262 (HYSTCMLLAGILLKMGAYGLV), 272–292 (AHSIFSPWLMIIGAIQIIYAA), 305–325 (IAYSSVSHMGFITIGIGSITD), 330–350 (GSILQIISHGFIGAALFFLAG), 386–406 (LALPGMSGFVAESVVFLGIIT), 416–436 (ILITFVMAIGMILTPIYSLSM), and 462–482 (LFILICILLPVIGIGIYPDFV).

This sequence belongs to the complex I subunit 4 family.

It localises to the plastid. Its subcellular location is the chloroplast thylakoid membrane. The enzyme catalyses a plastoquinone + NADH + (n+1) H(+)(in) = a plastoquinol + NAD(+) + n H(+)(out). It catalyses the reaction a plastoquinone + NADPH + (n+1) H(+)(in) = a plastoquinol + NADP(+) + n H(+)(out). This chain is NAD(P)H-quinone oxidoreductase chain 4, chloroplastic, found in Illicium oligandrum (Star anise).